Here is a 424-residue protein sequence, read N- to C-terminus: MVRYSLRKAHEYARDGENQEVLGEISQAIMYYGLAKSQFEKICQNTAQPLIKRCANNQIEELMVRIRELRESLPNKQTPISMSMSTRLSPMYTSSLTPRFTSNSMVLPGDHNTTVRLKPSFREALMEDSEDDLYQMYSKFEMQVKKLSTNYGLAVAFSIVPMDDDQPSPSIFSSDESFLIVEGDDFSLGNSVEEDANATSKEDPAYQNTNEQIQPLSNFDISQQEYLNNTRIPYENEDLHLQHITQGTTDDNNVSKFLIPSYNDAKELSEEEMGRSHKREESFKRAFGHASSSESSIGEITDSREDIQSNRLVNGSWENNDFTKEINNNFPDRSETPTLQTIEAPTKLMKYTRRKSLFRFPFFRSISGKKKEEPMESGTDSLESSTAQITVDSQLKIKQLETQIATLQKQLEQFQTSTLDQDLH.

A coiled-coil region spans residues 50-78 (LIKRCANNQIEELMVRIRELRESLPNKQT). A required for interaction with atg8 region spans residues 73–212 (LPNKQTPISM…DPAYQNTNEQ (140 aa)). The AIM motif lies at 178–181 (FLIV). The segment covering 268 to 284 (LSEEEMGRSHKREESFK) has biased composition (basic and acidic residues). The interval 268 to 299 (LSEEEMGRSHKREESFKRAFGHASSSESSIGE) is disordered. Positions 390 to 420 (TVDSQLKIKQLETQIATLQKQLEQFQTSTLD) form a coiled coil.

This sequence belongs to the ATG38 family. Component of the autophagy-specific vps34 PI3-kinase complex I composed of vps15, atg6, pik3/vps34, atg14 and atg38. Interacts (via AIM motif) with atg8; the interaction is direct and leads to recruitment of the autophagy-specific vps34 PI3-kinase complex I to the phagophore assembly site.

It localises to the preautophagosomal structure membrane. The protein localises to the cytoplasm. Its subcellular location is the cytosol. Functionally, functions as a part of the autophagy-specific VPS34 PI3-kinase complex I that plays a role in autophagosome assembly. This complex is essential to recruit the atg8-phosphatidylinositol conjugate and the atg12-atg5 conjugate to the pre-autophagosomal structure. By binding to atg8 at the phagophore assembly site, atg38 helps establish a positive feedback loop for recruitment of phagophore assembly proteins, including atg8. This chain is PtdIns3K complex I subunit atg38, found in Schizosaccharomyces pombe (strain 972 / ATCC 24843) (Fission yeast).